The sequence spans 197 residues: Pyridoxal 5'-phosphate synthase subunit PdxT (197 aa).

An L-glutamine-binding site is contributed by 53-55 (GES). The Nucleophile role is filled by cysteine 85. Residues arginine 114 and 142-143 (IR) each bind L-glutamine. Residues histidine 179 and glutamate 181 each act as charge relay system in the active site.

Belongs to the glutaminase PdxT/SNO family. In terms of assembly, in the presence of PdxS, forms a dodecamer of heterodimers. Only shows activity in the heterodimer.

It catalyses the reaction aldehydo-D-ribose 5-phosphate + D-glyceraldehyde 3-phosphate + L-glutamine = pyridoxal 5'-phosphate + L-glutamate + phosphate + 3 H2O + H(+). The enzyme catalyses L-glutamine + H2O = L-glutamate + NH4(+). It participates in cofactor biosynthesis; pyridoxal 5'-phosphate biosynthesis. Its function is as follows. Catalyzes the hydrolysis of glutamine to glutamate and ammonia as part of the biosynthesis of pyridoxal 5'-phosphate. The resulting ammonia molecule is channeled to the active site of PdxS. This chain is Pyridoxal 5'-phosphate synthase subunit PdxT, found in Pyrococcus furiosus (strain ATCC 43587 / DSM 3638 / JCM 8422 / Vc1).